The sequence spans 392 residues: NAD(P)H-quinone oxidoreductase subunit H, chloroplastic (392 aa).

It belongs to the complex I 49 kDa subunit family. NDH is composed of at least 16 different subunits, 5 of which are encoded in the nucleus.

Its subcellular location is the plastid. It localises to the chloroplast thylakoid membrane. The catalysed reaction is a plastoquinone + NADH + (n+1) H(+)(in) = a plastoquinol + NAD(+) + n H(+)(out). The enzyme catalyses a plastoquinone + NADPH + (n+1) H(+)(in) = a plastoquinol + NADP(+) + n H(+)(out). NDH shuttles electrons from NAD(P)H:plastoquinone, via FMN and iron-sulfur (Fe-S) centers, to quinones in the photosynthetic chain and possibly in a chloroplast respiratory chain. The immediate electron acceptor for the enzyme in this species is believed to be plastoquinone. Couples the redox reaction to proton translocation, and thus conserves the redox energy in a proton gradient. The protein is NAD(P)H-quinone oxidoreductase subunit H, chloroplastic of Marchantia polymorpha (Common liverwort).